The chain runs to 153 residues: Aspartate carbamoyltransferase regulatory chain (153 aa).

4 residues coordinate Zn(2+): Cys-109, Cys-114, Cys-138, and Cys-141.

This sequence belongs to the PyrI family. Contains catalytic and regulatory chains. Zn(2+) is required as a cofactor.

Functionally, involved in allosteric regulation of aspartate carbamoyltransferase. The protein is Aspartate carbamoyltransferase regulatory chain of Salmonella arizonae (strain ATCC BAA-731 / CDC346-86 / RSK2980).